The chain runs to 416 residues: Homogentisate 1,2-dioxygenase (416 aa).

H275 functions as the Proton acceptor in the catalytic mechanism. Residues H318 and E324 each contribute to the Fe cation site. The homogentisate site is built by Y333 and H354. Residue H354 participates in Fe cation binding.

The protein belongs to the homogentisate dioxygenase family. In terms of assembly, hexamer; dimer of trimers. It depends on Fe cation as a cofactor.

The enzyme catalyses homogentisate + O2 = 4-maleylacetoacetate + H(+). The protein operates within amino-acid degradation; L-phenylalanine degradation; acetoacetate and fumarate from L-phenylalanine: step 4/6. Functionally, involved in the catabolism of homogentisate (2,5-dihydroxyphenylacetate or 2,5-OH-PhAc), a central intermediate in the degradation of phenylalanine and tyrosine. Catalyzes the oxidative ring cleavage of the aromatic ring of homogentisate to yield maleylacetoacetate. This chain is Homogentisate 1,2-dioxygenase, found in Legionella pneumophila subsp. pneumophila (strain Philadelphia 1 / ATCC 33152 / DSM 7513).